The sequence spans 1682 residues: Calmodulin-binding transcription activator 1 (1682 aa).

Positions 63 to 188 form a DNA-binding region, CG-1; that stretch reads KCSSLPKERH…YLNVPAIEDC (126 aa). Residues 112–119 carry the Nuclear localization signal motif; that stretch reads RKKVKYRK. 2 disordered regions span residues 284-375 and 599-622; these read RIIS…MVDS and SSFS…FLQD. Basic and acidic residues predominate over residues 302-327; sequence EVQHNDVSEGKHEPSHGRSTSREKRN. 2 stretches are compositionally biased toward polar residues: residues 337–367 and 599–618; these read HQNS…SGLN and SSFS…SPSF. The IPT/TIG domain maps to 877–955; it reads DYSPEWSYPE…ISNSVVFEYK (79 aa). Positions 992–1020 are disordered; it reads MAEMTGSQQHKQASGGGGSGSGSGSGAGG. Gly residues predominate over residues 1005-1020; sequence SGGGGSGSGSGSGAGG. ANK repeat units follow at residues 1066 to 1095, 1111 to 1141, and 1145 to 1174; these read RGMT…KHAD, FSCT…AISI, and LGRL…DEQA. 2 disordered regions span residues 1217-1249 and 1267-1318; these read ASTN…KKHK and LSLE…SASQ. Over residues 1268-1291 the composition is skewed to polar residues; that stretch reads SLEQPNIRKQSPRSKQPSPETISP. The span at 1308–1318 shows a compositional bias: low complexity; sequence ETAASQASASQ. 3 consecutive IQ domains span residues 1549–1585, 1586–1608, and 1609–1631; these read QEVA…AAIL, IQSK…AAVL, and IQNF…TAVI.

The protein belongs to the CAMTA family. May interact with calmodulin.

Its subcellular location is the nucleus. It localises to the cytoplasm. Its function is as follows. Transcriptional activator. This chain is Calmodulin-binding transcription activator 1, found in Mus musculus (Mouse).